A 434-amino-acid chain; its full sequence is CinA-like protein (434 aa).

The protein belongs to the CinA family.

This Mycolicibacterium paratuberculosis (strain ATCC BAA-968 / K-10) (Mycobacterium paratuberculosis) protein is CinA-like protein.